A 290-amino-acid polypeptide reads, in one-letter code: MKNTFSRLFGFGDKMSELEIQNESHEDINKKIHEEIHEIPIANIIPNRYQPRTVFDDARIDELALTIRTHGLIQPIVVRQYEEDCYEIIAGERRFRAATKLGWEKVPAIIKNLNDTETASVALIENLQREELTAIEEAVAYQKLIELHNLTQEALAQRLGKGQSTIANKLRLLKLPEDIKRSLLEKSITERHARALIPLKNEELQLKVLQEIVEKQLNVKQTEERIAKLLEEVKPKRKAKKKAVSRDMRIAMNTIRQSLQMVAKSGLNVNSEEEEFDEYYQITIKIPKKK.

The H-T-H motif DNA-binding region spans 153-172 (EALAQRLGKGQSTIANKLRL).

It belongs to the ParB family.

The protein resides in the cytoplasm. Its subcellular location is the nucleoid. Effects nucleoid occlusion by binding relatively nonspecifically to DNA and preventing the assembly of the division machinery in the vicinity of the nucleoid, especially under conditions that disturb the cell cycle. It helps to coordinate cell division and chromosome segregation by preventing the formation of the Z ring through the nucleoid, which would cause chromosome breakage. This Bacillus cytotoxicus (strain DSM 22905 / CIP 110041 / 391-98 / NVH 391-98) protein is Nucleoid occlusion protein.